The following is a 707-amino-acid chain: SEC14-like protein 5 (707 aa).

In terms of domain architecture, PRELI/MSF1 spans 3 to 175; that stretch reads QKYQSPVRVY…YLNELISQGI (173 aa). The span at 201-211 shows a compositional bias: polar residues; it reads RSNQAEQTASQ. Residues 201–232 are disordered; the sequence is RSNQAEQTASQGPCKADAGSHSLAAEPSTPDT. In terms of domain architecture, CRAL-TRIO spans 315 to 491; the sequence is PPRVLEEYYA…FLGGECVCNI (177 aa). Residues 518-667 enclose the GOLD domain; the sequence is TETIYQSSCV…KCKLMYYFEV (150 aa). Polar residues predominate over residues 686-695; it reads FSQLSGVTNT. Residues 686–707 form a disordered region; it reads FSQLSGVTNTSSKSHSSSLISR. Residues 696–707 are compositionally biased toward low complexity; that stretch reads SSKSHSSSLISR.

This chain is SEC14-like protein 5 (sec14l1), found in Xenopus tropicalis (Western clawed frog).